A 302-amino-acid polypeptide reads, in one-letter code: GTPase Era (302 aa).

Positions 9–177 (YCGFIAIVGR…EKIVRQSLRE (169 aa)) constitute an Era-type G domain. Positions 17–24 (GRPNVGKS) are G1. Residue 17-24 (GRPNVGKS) participates in GTP binding. A G2 region spans residues 43 to 47 (QTTRH). The interval 64 to 67 (DTPG) is G3. GTP-binding positions include 64-68 (DTPGL) and 126-129 (NKVD). The G4 stretch occupies residues 126–129 (NKVD). Residues 156–158 (ISA) form a G5 region. Residues 208-285 (TGEELPYSVT…HLELWVKVKS (78 aa)) enclose the KH type-2 domain.

This sequence belongs to the TRAFAC class TrmE-Era-EngA-EngB-Septin-like GTPase superfamily. Era GTPase family. As to quaternary structure, monomer.

It is found in the cytoplasm. The protein resides in the cell inner membrane. Its function is as follows. An essential GTPase that binds both GDP and GTP, with rapid nucleotide exchange. Plays a role in 16S rRNA processing and 30S ribosomal subunit biogenesis and possibly also in cell cycle regulation and energy metabolism. The sequence is that of GTPase Era from Haemophilus influenzae (strain PittGG).